Consider the following 775-residue polypeptide: E3 ubiquitin-protein ligase ICP0 (775 aa).

The tract at residues 1–112 (MEPRPGASTR…PPREDGGSDE (112 aa)) is disordered. Composition is skewed to basic and acidic residues over residues 10–21 (RRPEGRPQREPA) and 45–57 (VGGR…HDDD). Residues 58 to 69 (SASEADSTDTEL) are compositionally biased toward acidic residues. Thr67 bears the Phosphothreonine; by host; by CK1 mark. The segment at 116–157 (CAVCTDEIAPHLRCDTFPCMHRFCIPCMKTWMQLRNTCPLCN) adopts an RING-type zinc-finger fold. The segment at 221 to 636 (RALSPTHPEP…HAETSGAVPA (416 aa)) is disordered. Positions 231 to 243 (TTDEDDDDLDDAD) are enriched in acidic residues. Positions 258 to 284 (RRGAAAPPVTGGASHAAPQPAAARTAP) are enriched in low complexity. The span at 293–302 (GSSNTNTTTN) shows a compositional bias: polar residues. Residues 310 to 321 (RQSRAAAPRGAS) are compositionally biased toward low complexity. A compositionally biased stretch (gly residues) spans 322-331 (GPSGGVGVGV). A compositionally biased stretch (pro residues) spans 369–390 (PASPHRPPAAPMPGSAPRPGPP). Positions 391 to 409 (ASAAASGPARPRAAVAPCV) are enriched in low complexity. Over residues 410–421 (RAPPPGPGPRAP) the composition is skewed to pro residues. Positions 422–431 (APGAEPAARP) are enriched in low complexity. Positions 439 to 453 (QSHSSLAQAANQEQS) are enriched in polar residues. Gly residues predominate over residues 464 to 476 (GSGGPGVEGGHGP). A compositionally biased stretch (low complexity) spans 477 to 493 (SRGAAPSGAAPLPSAAS). Positions 509–519 (GQENPSPQSTR) are enriched in polar residues. The span at 539–549 (GPGGRGQGGPG) shows a compositional bias: gly residues. The segment covering 550–592 (TPLTSSAASASSSSASSSSAPTPAGAASSAAGAASSSASASSG) has biased composition (low complexity). Basic residues predominate over residues 617-626 (GPRKCARKTR).

It belongs to the simplexviruses ICp0 family. Interacts directly with human RCOR1/CoREST protein, leading to the disruption of the human BHC corepressor complex. Interacts with human CENPA, leading to its degradation. Interacts with human USP7; this interaction modulates ICP0 stability. Interacts with human CDC34. Interacts (when phosphorylated) with human RNF8 (via FHA domain). Interacts with human TRIM27. Interacts with human ZBP1. Interacts with host MORC3; this interaction promotes the degradation of host MORC3. Post-translationally, phosphorylated at Thr-67, leading to promote interaction with host RNF8. Phosphorylated by host CHEK2; leading to increased SUMO-targeted ubiquitin ligase activity of ICP0. In terms of processing, auto-ubiquitinated. Deubiquitinated by host USP7; leading to stabilize it.

It localises to the host cytoplasm. The protein localises to the host nucleus. It carries out the reaction S-ubiquitinyl-[E2 ubiquitin-conjugating enzyme]-L-cysteine + [acceptor protein]-L-lysine = [E2 ubiquitin-conjugating enzyme]-L-cysteine + N(6)-ubiquitinyl-[acceptor protein]-L-lysine.. Its function is as follows. SUMO-targeted ubiquitin ligase that plays an essential role in nuclear antiviral defense evasion triggered by dsDNA viruses. Acts during the initial stages of lytic infection and the reactivation of latent viral genome. Prevents the antiviral effect of nuclear bodies by degrading host PML, SP100 and MORC3. Prevents antiviral response to viral DNA induced by IFI16 by degrading it. Additionally, inhibits host IRF3 nuclear signaling to prevent interferon production by the infected cells. Interestingly, the E3 ubiquitin ligase activity associated with the RING finger domain does not seem to be directly required to inhibit the activation of IRF3 but instead plays a critical role in modulating the cellular localization of ICP0. Upon reactivation of latent genome, suppresses the silencing of viral DNA by dissociating either HDAC1 or HDAC2 from the HDAC-RCOR1-REST-KDM1A complex localized at the ND10 structures and causes their dispersal. Two cellular histone ubiquitin ligases RNF8 and RNF168 are also targeted by ICP0 for degradation, leading to a loss of ubiquitinated forms of H2A, a relief of transcriptional repression, and the activation of latent viral genomes. Enhances the localization of host CCND3 to ND10 bodies that serve as precursors of replication compartments to enable efficient viral replication. Like many RING-finger E3 ubiquitin ligases, ICP0 can induce its own ubiquitination, an activity that promotes its instability due to its targeting to the 26S proteasome for degradation. ICP0 restricts this process by recruiting the cellular ubiquitin-specific protease USP7 that cleaves the anchored ubiquitin chains from ICP0, thereby promoting its stabilization. This Homo sapiens (Human) protein is E3 ubiquitin-protein ligase ICP0 (ICP0).